The following is a 445-amino-acid chain: Nuclear hormone receptor family member nhr-1 (445 aa).

The interval 19–55 is disordered; that stretch reads PMVNSQRNEDPSMYMNGSAASVSHTNGSSSMGNDQKF. Over residues 36 to 51 the composition is skewed to polar residues; sequence SAASVSHTNGSSSMGN. A DNA-binding region (nuclear receptor) is located at residues 70-145; it reads GELCAVCSDL…VGMDAKALQI (76 aa). 2 NR C4-type zinc fingers span residues 73–93 and 109–133; these read CAVC…CNGC and CQYN…FNKC. An NR LBD domain is found at 179–444; that stretch reads QDQEIIDQLT…PFVKELCMKR (266 aa).

Belongs to the nuclear hormone receptor family.

The protein resides in the nucleus. Its function is as follows. Orphan nuclear receptor which acts in concert with the insulin/IGF-1-like signaling (IIS) pathway during osmotic stress, perhaps in response to a ligand modified by the sulfotransferase ssu-1. The chain is Nuclear hormone receptor family member nhr-1 (nhr-1) from Caenorhabditis elegans.